Reading from the N-terminus, the 512-residue chain is Probable malate:quinone oxidoreductase (512 aa).

Belongs to the MQO family. It depends on FAD as a cofactor.

It catalyses the reaction (S)-malate + a quinone = a quinol + oxaloacetate. It participates in carbohydrate metabolism; tricarboxylic acid cycle; oxaloacetate from (S)-malate (quinone route): step 1/1. The sequence is that of Probable malate:quinone oxidoreductase from Bradyrhizobium diazoefficiens (strain JCM 10833 / BCRC 13528 / IAM 13628 / NBRC 14792 / USDA 110).